The primary structure comprises 147 residues: METLITISRWLAKQHVVTWCVQQEGELWCANAFYLFDAQKVAFYILTEEKTRHAQMSGPQAAVAGTVNGQPKTVALIRGVQFKGEIRRLEGEESDLARKAYNHRFPVARMLSAPVWEIRLDEIKFTDNTLGFGKKMIWLRDSGTEQA.

This sequence belongs to the UPF0306 family.

This Shigella boydii serotype 4 (strain Sb227) protein is UPF0306 protein YhbP.